The primary structure comprises 158 residues: Urease subunit beta (158 aa).

A disordered region spans residues 113 to 158; it reads EDDWRRSSAAGDAPQELPQVEAAERGRKLDEATDVGTEDTPEEGQN. The span at 134–143 shows a compositional bias: basic and acidic residues; it reads AAERGRKLDE. Residues 144-158 are compositionally biased toward acidic residues; sequence ATDVGTEDTPEEGQN.

This sequence belongs to the urease beta subunit family. In terms of assembly, heterotrimer of UreA (gamma), UreB (beta) and UreC (alpha) subunits. Three heterotrimers associate to form the active enzyme.

The protein localises to the cytoplasm. The catalysed reaction is urea + 2 H2O + H(+) = hydrogencarbonate + 2 NH4(+). Its pathway is nitrogen metabolism; urea degradation; CO(2) and NH(3) from urea (urease route): step 1/1. This is Urease subunit beta from Corynebacterium glutamicum (strain R).